A 188-amino-acid chain; its full sequence is HTH-type transcriptional regulator LmrA (188 aa).

The HTH tetR-type domain maps to 4–64; it reads GDSREKILSA…IEAVNEMKEY (61 aa). Residues 27 to 46 constitute a DNA-binding region (H-T-H motif); that stretch reads GLNQIIKESGAPKGSLYYHF.

Its function is as follows. Acts as a repressor of the lincomycin-resistance (lmrAB) and yxaGH operons. This is HTH-type transcriptional regulator LmrA (lmrA) from Bacillus subtilis (strain 168).